Reading from the N-terminus, the 930-residue chain is Translation initiation factor IF-2 (930 aa).

Positions 50–67 are enriched in low complexity; that stretch reads FKPAAAPKVEAKPAAPKV. Disordered stretches follow at residues 50–195 and 260–346; these read FKPA…PRID and EVVP…HELP. Composition is skewed to basic and acidic residues over residues 68–90 and 110–125; these read SAEKKTEKSEPAKPAVAKEEAKP and FKAEREARAKEQAERR. Residues 129 to 141 are compositionally biased toward low complexity; that stretch reads KGNNRDQQQNGNR. 2 stretches are compositionally biased toward basic and acidic residues: residues 157-167 and 262-295; these read RDNRRFNDQAK and VPEKKEPAVDTRRKKQARPDKNRDDYDHEEDGPR. Low complexity predominate over residues 309–318; the sequence is NQKNSNWNNN. Basic and acidic residues predominate over residues 337–346; it reads VTERKFHELP. In terms of domain architecture, tr-type G spans 432–599; it reads ERPPVVTIMG…TVLLVAEIQE (168 aa). Residues 441 to 448 form a G1 region; that stretch reads GHVDHGKT. 441–448 is a GTP binding site; it reads GHVDHGKT. The segment at 466–470 is G2; that stretch reads GITQH. Residues 487–490 are G3; that stretch reads DTPG. GTP-binding positions include 487-491 and 541-544; these read DTPGH and NKID. A G4 region spans residues 541–544; the sequence is NKID. The interval 577–579 is G5; it reads SAK.

It belongs to the TRAFAC class translation factor GTPase superfamily. Classic translation factor GTPase family. IF-2 subfamily.

The protein localises to the cytoplasm. Functionally, one of the essential components for the initiation of protein synthesis. Protects formylmethionyl-tRNA from spontaneous hydrolysis and promotes its binding to the 30S ribosomal subunits. Also involved in the hydrolysis of GTP during the formation of the 70S ribosomal complex. This is Translation initiation factor IF-2 from Streptococcus pneumoniae (strain ATCC BAA-255 / R6).